The following is a 620-amino-acid chain: Glutathione-regulated potassium-efflux system protein KefC (620 aa).

12 consecutive transmembrane segments (helical) span residues 4–24 (HTLIQALIYLGSAALIVPVAV), 26–46 (LGLGSVLGYLIAGGLIGPWGL), 54–74 (AILHFAEIGVVLMLFVIGLEL), 86–106 (VFGGGALQMGACGLLLGGFCV), 114–134 (VALLIGLTLALSSTAIAMQAM), 149–169 (FAVLLFQDIAAIPLVAMIPLL), 178–198 (ASAFFLSALKVVGALALVVLL), 218–238 (VFSAVALFLVFGFGLLLEEAG), 271–291 (LLLGLFFIGVGMSIDFGTLVA), 296–316 (VLTLLFGFLIIKTVTLWLVAK), 326–346 (RWFAVLLGQGSEFAFVIFGAA), and 359–379 (ALTLAVALSMAATPLLLVLLT). The RCK N-terminal domain occupies 399-518 (QPRVIIAGFG…AGVAQPERET (120 aa)). Positions 596–620 (HGWQGTREGKHTGNDADEPEVKPQP) are disordered.

Belongs to the monovalent cation:proton antiporter 2 (CPA2) transporter (TC 2.A.37) family. KefC subfamily. Homodimer. Interacts with the regulatory subunit KefF.

It localises to the cell inner membrane. Pore-forming subunit of a potassium efflux system that confers protection against electrophiles. Catalyzes K(+)/H(+) antiport. This chain is Glutathione-regulated potassium-efflux system protein KefC, found in Cronobacter sakazakii (strain ATCC BAA-894) (Enterobacter sakazakii).